We begin with the raw amino-acid sequence, 194 residues long: Interferon alpha (194 aa).

The first 23 residues, 1–23 (MALPSSFLVALVALGCNSVCSLG), serve as a signal peptide directing secretion. 2 disulfide bridges follow: C24–C123 and C52–C166. N-linked (GlcNAc...) asparagine glycosylation is present at N102.

Belongs to the alpha/beta interferon family.

Its subcellular location is the secreted. Its function is as follows. Produced by macrophages, IFN-alpha have antiviral activities. Interferon stimulates the production of two enzymes: a protein kinase and an oligoadenylate synthetase. This chain is Interferon alpha, found in Felis catus (Cat).